A 322-amino-acid chain; its full sequence is (12E)-labda-8(17),12,14-triene synthase (322 aa).

Positions 1-11 are enriched in polar residues; it reads MNDATRTSTTP. Positions 1–26 are disordered; sequence MNDATRTSTTPPALPMPDLRDSFPGP. Mg(2+) is bound by residues Asp93 and Glu98. The DDXXXE motif signature appears at 93–98; sequence DDAHGE. Arg188 is a substrate binding site. Positions 234 and 238 each coordinate Mg(2+). An NXXXSXXXE motif motif is present at residues 234–242; sequence NDLASYAKE. Lys241 serves as a coordination point for substrate. Glu242 contributes to the Mg(2+) binding site. 319–320 contacts substrate; the sequence is RY.

It belongs to the terpene synthase family. Mg(2+) is required as a cofactor.

The enzyme catalyses (+)-copalyl diphosphate = (12E)-labda-8(17),12,14-triene + diphosphate. Functionally, involved in the biosynthesis of the labdane-type bicyclic diterpene labda-8(17),12(E),14-triene. Catalyzes the conversion of (+)-copalyl diphosphate to yield labda-8(17),12(E),14-triene. This Streptomyces anulatus (Streptomyces chrysomallus) protein is (12E)-labda-8(17),12,14-triene synthase.